Here is a 229-residue protein sequence, read N- to C-terminus: ATP synthase subunit a (229 aa).

Transmembrane regions (helical) follow at residues Arg24–Cys44, Leu45–Phe65, Leu83–Cys103, Phe117–Cys137, Phe143–Phe163, Cys177–Leu199, and Leu206–Phe228.

It belongs to the ATPase A chain family. As to quaternary structure, F-type ATPases have 2 components, CF(1) - the catalytic core - and CF(0) - the membrane proton channel. CF(1) has five subunits: alpha(3), beta(3), gamma(1), delta(1), epsilon(1). CF(0) has three main subunits: a, b and c.

Its subcellular location is the mitochondrion inner membrane. Its function is as follows. Mitochondrial membrane ATP synthase (F(1)F(0) ATP synthase or Complex V) produces ATP from ADP in the presence of a proton gradient across the membrane which is generated by electron transport complexes of the respiratory chain. F-type ATPases consist of two structural domains, F(1) - containing the extramembraneous catalytic core and F(0) - containing the membrane proton channel, linked together by a central stalk and a peripheral stalk. During catalysis, ATP synthesis in the catalytic domain of F(1) is coupled via a rotary mechanism of the central stalk subunits to proton translocation. Key component of the proton channel; it may play a direct role in the translocation of protons across the membrane. This is ATP synthase subunit a (ATP6) from Trypanosoma brucei brucei.